A 355-amino-acid chain; its full sequence is Alpha-N-acetylneuraminide alpha-2,8-sialyltransferase (355 aa).

At 1–28 the chain is on the cytoplasmic side; that stretch reads MSPCGRALHTSRGAMAMLARKFPRTRLP. The chain crosses the membrane as a helical; Signal-anchor for type II membrane protein span at residues 29 to 47; that stretch reads VGASALCVVVLCWLYIFPV. At 48-355 the chain is on the lumenal side; it reads YRLPNEKEIV…CEEPSPQPTS (308 aa). N70 and N118 each carry an N-linked (GlcNAc...) asparagine glycan. 2 cysteine pairs are disulfide-bonded: C137/C286 and C151/C346. Positions 142 and 165 each coordinate CMP-N-acetyl-beta-neuraminate. N-linked (GlcNAc...) asparagine glycosylation is found at N213 and N244. Residues S273, T274, G275, W295, and H309 each coordinate CMP-N-acetyl-beta-neuraminate. H321 (proton donor/acceptor) is an active-site residue.

It belongs to the glycosyltransferase 29 family.

It localises to the golgi apparatus membrane. It carries out the reaction an N-acetyl-alpha-neuraminyl-(2-&gt;3)-beta-D-galactosyl derivative + CMP-N-acetyl-beta-neuraminate = an N-acetyl-alpha-neuraminyl-(2-&gt;8)-N-acetyl-alpha-neuraminyl-(2-&gt;3)-beta-D-galactosyl derivative + CMP + H(+). The catalysed reaction is a ganglioside GM3 (d18:1(4E)) + CMP-N-acetyl-beta-neuraminate = a ganglioside GD3 (d18:1(4E)) + CMP + H(+). The enzyme catalyses a ganglioside GD3 (d18:1(4E)) + CMP-N-acetyl-beta-neuraminate = a ganglioside GT3 (d18:1(4E)) + CMP + H(+). It catalyses the reaction a ganglioside GD1a (d18:1(4E)) + CMP-N-acetyl-beta-neuraminate = a ganglioside GT1a (d18:1(4E)) + CMP + H(+). It carries out the reaction a ganglioside GT1b (d18:1(4E)) + CMP-N-acetyl-beta-neuraminate = a ganglioside GQ1b (d18:1(4E)) + CMP + H(+). The catalysed reaction is a ganglioside GM1b (d18:1(4E)) + CMP-N-acetyl-beta-neuraminate = a ganglioside GD1c (d18:1(4E)) + CMP + H(+). The enzyme catalyses a ganglioside GD3 + CMP-N-acetyl-beta-neuraminate = a ganglioside GT3 + CMP + H(+). It catalyses the reaction [alpha-N-acetylneuraminyl-(2-&gt;8)](n)-alpha-N-acetylneuraminyl-(2-&gt;8)-alpha-N-acetylneuraminyl-(2-&gt;3)-beta-D-galactosyl-(1-&gt;4)-beta-D-glucosyl-(1&lt;-&gt;1)-ceramide + CMP-N-acetyl-beta-neuraminate = [alpha-N-acetylneuraminyl-(2-&gt;8)](n+1)-alpha-N-acetylneuraminyl-(2-&gt;8)-alpha-N-acetylneuraminyl-(2-&gt;3)-beta-D-galactosyl-(1-&gt;4)-beta-D-glucosyl-(1&lt;-&gt;1)-ceramide + CMP + H(+). It participates in protein modification; protein glycosylation. The protein operates within lipid metabolism; sphingolipid metabolism. In terms of biological role, catalyzes the addition of sialic acid in alpha 2,8-linkage to the sialic acid moiety of the ganglioside GM3 to form ganglioside GD3; gangliosides are a subfamily of complex glycosphingolipds that contain one or more residues of sialic acid. Can catalyze the addition of a second alpha-2,8- sialic acid to GD3 to form GT3. Can use GM1b, GD1a and GT1b as acceptor substrates to synthesize GD1c, GT1a and GQ1b respectively. This is Alpha-N-acetylneuraminide alpha-2,8-sialyltransferase from Mus musculus (Mouse).